The sequence spans 569 residues: Putative potassium-transporting ATPase ATP-binding subunit (569 aa).

The next 2 helical transmembrane spans lie at 34 to 54 (PVMFVVWAGSVLATLLTLAMV) and 58 to 78 (IAGSALFTGVISLWLWFTVLF). The active-site 4-aspartylphosphate intermediate is the Asp-194. Residues Asp-231, Glu-235, 264–271 (FTAQSRMS), and Lys-282 each bind ATP. Mg(2+) contacts are provided by Asp-405 and Asp-409. 3 consecutive transmembrane segments (helical) span residues 475–495 (FAIIPAAFAATYPQLNALNVM), 503–523 (AILSAVIFNALIIIFLIPLAL), and 543–563 (IYGLGGLVVPFIGIKVIDVLL).

Belongs to the cation transport ATPase (P-type) (TC 3.A.3) family. Type IA subfamily. In terms of assembly, the system is composed of three essential subunits: KdpA, KdpB and KdpC.

Its subcellular location is the cell inner membrane. The enzyme catalyses K(+)(out) + ATP + H2O = K(+)(in) + ADP + phosphate + H(+). Functionally, part of the high-affinity ATP-driven potassium transport (or Kdp) system, which catalyzes the hydrolysis of ATP coupled with the electrogenic transport of potassium into the cytoplasm. This subunit is responsible for energy coupling to the transport system and for the release of the potassium ions to the cytoplasm. This Salmonella typhi protein is Putative potassium-transporting ATPase ATP-binding subunit.